Reading from the N-terminus, the 91-residue chain is Elongation factor 1-beta (91 aa).

This sequence belongs to the EF-1-beta/EF-1-delta family.

Promotes the exchange of GDP for GTP in EF-1-alpha/GDP, thus allowing the regeneration of EF-1-alpha/GTP that could then be used to form the ternary complex EF-1-alpha/GTP/AAtRNA. This Pyrococcus abyssi (strain GE5 / Orsay) protein is Elongation factor 1-beta (ef1b).